The primary structure comprises 310 residues: Putative olfactory receptor 7A2 (310 aa).

Over 1-26 (MVKAGNETQISEFLLLGFSEKQELQP) the chain is Extracellular. N-linked (GlcNAc...) asparagine glycosylation is present at Asn6. A helical transmembrane segment spans residues 27–47 (FLFGLFLSMYLVTVLGNLLII). The Cytoplasmic portion of the chain corresponds to 48-55 (LAAISDSC). Residues 56-76 (LHTPMYFFLSNLSFVDICFAS) form a helical membrane-spanning segment. The Extracellular portion of the chain corresponds to 77-100 (TMVPKMLVNIQTQSKVITYAGCIT). A disulfide bond links Cys98 and Cys190. The helical transmembrane segment at 101-121 (QMCFFVLFIVLDSLLLTVMAY) threads the bilayer. Topologically, residues 122–140 (DQFVAICHPLHYTVIMSPQ) are cytoplasmic. A helical transmembrane segment spans residues 141–161 (LCGLLVLVSWIMSVLNSMLQS). Over 162–198 (LVTLQLSFCTDLEIPHFFCELNEMIHLACSDTFVNNM) the chain is Extracellular. Residues 199–218 (VMHFAAVLLDGGPLVGILYS) form a helical membrane-spanning segment. Over 219-238 (YCRIVSSIRAISSTQGKYKA) the chain is Cytoplasmic. A helical membrane pass occupies residues 239 to 259 (LSTCASHLSVVSIFYGTGLGV). Residues 260–272 (YLSSTMTQNLHST) lie on the Extracellular side of the membrane. A helical transmembrane segment spans residues 273 to 293 (AVASVMYTVVTPMLNPFIYSL). Over 294 to 310 (RNKDIKGALTQFFRGKQ) the chain is Cytoplasmic.

It belongs to the G-protein coupled receptor 1 family.

The protein localises to the cell membrane. Functionally, odorant receptor. The polypeptide is Putative olfactory receptor 7A2 (OR7A2P) (Homo sapiens (Human)).